The primary structure comprises 2493 residues: MLFTMQFTTRSTVASPEQQHQHQQRSISYSDIELGLERISSRDSNGSSNFTHRAYPPPLSQQYDDTSTNSFHSSQPDITASSSTLSSRLVSANYSRPRFEHAHTQPPTPDQDRSSSGSGSGSGSRSYFPANSHSDSLPGPSTHSISPSFDEDELRQIMSHIPANQATSSSDGDVGKAVQSANHQDISPFLFQSENAAPFSSSHSNRTSVNPSAASTASPSTSAATRTRPRGGTNASQYNTLDTSFGSIDRPGLSSSRSQYSLRPQTPPSASTSTSTLNGSKDTHASAVKKTRNPFGFLKKKSSAHSNASSNHPTRHDIGSVSSLSSRYGPNAAANVNPMRPPAWLDNHCTLANSNSPSSASLRSHYHQPPASSNPPPWQNPLVSRADSTPSAMSLEDEVEAEHHLKKDPRKRIKGVRHHLAKTTKPGEDADSARDPAFAAQSQSIEQEVELSLDMNFDQLDDFVDTNAARQRLQGSITESASPSEHRSPNGSEAGVYRSPSPSQTPIAERQTSVTSTVESPSHASEASLAPSGSLRTPSRTTASTSTSSASTVLSDRLPSQVNMLPRNSVPRLSLAEMQNYQSLRKLSNNLIDMSQTQNPSAMGASYRRGSIAAAQAPVDAPQLGVAPRTDSELSDRKDSVVSTHSMRSNHSGISPKTSYANLPSVIQERQKPATALPSAANWTSSITRDKTANGHADHAYQFPPATEYQSNLLLSVRKSSASSGQEPSSSWMAPDSWAVQPDKMRDYLRDDNVGEEEDDDDDQHQARAALATDGKRRGSSSGISSTHASSMFRTSSTDPFKKTASLAGSRRGTDDSVDPLTALPPLPGSKSVDEAAANKVDVLQQTNNLAQSALVQQQSQSQNHHQPSPNVRPTSRGGAGAHMFASAGASAAAAAAGKLGLHRPSKHRMNARPNTAGSVGATRPSTTTLGSTLSAEDDTSINGSIRRDGHPLKRSATANTNNATGTLPRNHFIRVYKTDGTFATLSCSLVSTANEVQTILARKSLTTESAAYRLFVRDKGSERPLGISDKPSQLQRRRLIQAGYTENDGLEDMGRDDLSYLLRFVFRPDSVPTFDSESIGHSEHTFQHLDLHSRNLEMVPIFLYKHADWIVSLDLSGNPMSDLPLDFVQLCSSLRTLRLSNLALKRIPQSVRHSETLTHLDVSNNRIVELAHVSLDLIPELMSLKVQNNRLFDLPSYFSSISTLRNLNISNNRFEEFPKVICDVPSLVDLDVSFNSITELPAEIANLINLERFILAGNELEKLPDSMSELVSLRTIDLRRNKVQDVSSLLGLPRLQNIQAESNNIKSFEATLGPQLTQVELGRNPLSKVRIAALTTCDLTSLDLSSTNMTRLEEGLFPQLPALVKLTLDGNQLVVLPDTLGDLKRLEMLSCSNNLLATLPESIGDLKALKELLVHNNNLKTLPQTLWLCESLAHINLSSNLLESFPAVPDIRTDASVGDAAAAAGTSAVIAARKGSTSSSLTHRSNTGGANGNINLSTPSEVFVAPLSLSLQKLRLGDNRLGDDVFSVLSELTSLEVLNLSFNEIFEIPDFSLQTLTKLRELYISGNQLSTIPSDDLVVLQELRILHLNCNKLTTLPTELGKLKKLANLDVGNNVLKYNIANWHYDWNWNMNPELRYLNLSGNTRLEIKTKLSDMGFTRKSNISDFSRLTSLRMLGLMDVTMPLHSNATPDESDNRRVRTSLSQVNGMAYGIADALGKHDNLSVIDLVIPTFRKDEGECIFGLFDGRGHGAHVGSRIAHHLAEWSGHRLSWEFQKHQNEMTAEPVSVPDALRRAFLRLQKDYADALINDGSRKLSEAHAEAAADVTRSSAPAIAAASNKHDWRAGASAILAYVVDHTLYIANAGDALAVMSRNGGTAHLISNKHEPFDRAEIERIRSAEGWVSLRGYVNDMLDVSRSFGYFHLFPIVNAAPAVTTVQLTDSDEFVIIANRTLWQYVSYQTAVDIARTQRNDPMIAAQKLRDFAISYGAEESIMVMVISVGDLFYRSDQRNGGGLNFASYKNSDAIQKAGRRFREELPGDRTLARLDREVAPPIGQVALVFTDIKNSTSLWETNNGMQTAMRLHNYLLRRQLRTIGGYEVKTEGDAFMVSFPSVSAALLWCFTVQQQLLQEDWPREILDSEDGKEVYDQSGELIHRGLSVRMGIHWGRPVCEADPITRRMDYFGPMVNRAARISGAADGGQILASKDVIKELQGLLGTFDESSTAGGAGGEGENLEKTEEELDEDAFRLLNPNVSRDVVLLRRMGFGLSQLGERRLKGLETPEMLWLVYPKQLAGRLEQAKTDDAPDAPTAQVYEPTVQLLDIEDVKQVGMLCLRLEYLSNSTVCPGIFAAKDEADRSQPSTPLDDNGRNPIDGHGTAVPLLSHQARRKGVEAMLTMHPELLIYSIRDDATDEELAGILDQLTTRIQNAVSSLMLNMLRDKTANGTKELGVDPGVLELLMGLLSQPPPRASTSALSLPSPRTSPRNRLLELVP.

Composition is skewed to polar residues over residues 1 to 18, 42 to 51, 60 to 78, 129 to 147, and 197 to 210; these read MLFT…SPEQ, RDSNGSSNFT, SQQY…QPDI, PANS…SISP, and APFS…TSVN. Disordered stretches follow at residues 1 to 85, 99 to 148, 197 to 325, 355 to 444, 475 to 565, 616 to 660, 753 to 832, 854 to 882, and 904 to 967; these read MLFT…SSTL, FEHA…ISPS, APFS…SSLS, NSPS…QSQS, GSIT…VNML, QAPV…KTSY, NVGE…GSKS, ALVQ…GAGA, and RPSK…ATGT. Residues 211 to 233 show a composition bias toward low complexity; it reads PSAASTASPSTSAATRTRPRGGT. Composition is skewed to polar residues over residues 234-246 and 253-264; these read NASQ…TSFG and LSSSRSQYSLRP. Composition is skewed to basic residues over residues 287-303 and 404-422; these read AVKK…KKSS and HLKK…HLAK. The segment covering 425–434 has biased composition (basic and acidic residues); sequence KPGEDADSAR. Residues 500-525 are compositionally biased toward polar residues; that stretch reads PSPSQTPIAERQTSVTSTVESPSHAS. Residues 534-555 are compositionally biased toward low complexity; sequence SLRTPSRTTASTSTSSASTVLS. A compositionally biased stretch (basic and acidic residues) spans 630–640; it reads TDSELSDRKDS. Residues 641-660 are compositionally biased toward polar residues; it reads VVSTHSMRSNHSGISPKTSY. Positions 754 to 763 are enriched in acidic residues; it reads VGEEEDDDDD. Low complexity-rich tracts occupy residues 780-791 and 854-870; these read SSSGISSTHASS and ALVQ…QPSP. Residues 913–935 are compositionally biased toward polar residues; the sequence is RPNTAGSVGATRPSTTTLGSTLS. The Ras-associating domain occupies 970 to 1072; the sequence is RNHFIRVYKT…LRFVFRPDSV (103 aa). LRR repeat units follow at residues 1086 to 1107, 1110 to 1132, 1134 to 1155, 1157 to 1178, 1181 to 1202, 1204 to 1225, 1227 to 1248, 1250 to 1271, 1273 to 1294, 1295 to 1316, 1317 to 1336, 1339 to 1360, 1363 to 1385, 1386 to 1407, 1409 to 1430, 1432 to 1453, 1511 to 1534, 1535 to 1556, 1559 to 1580, 1583 to 1605, 1606 to 1628, and 1635 to 1654; these read TFQH…LYKH, WIVS…VQLC, SLRT…VRHS, TLTH…SLDL, ELMS…FSSI, TLRN…ICDV, SLVD…IANL, NLER…MSEL, SLRT…LGLP, RLQN…LGPQ, LTQV…AALT, DLTS…LFPQ, ALVK…GDLK, RLEM…IGDL, ALKE…LWLC, SLAH…PDIR, SLQK…SELT, SLEV…SLQT, KLRE…DLVV, ELRI…GKLK, KLAN…HYDW, and ELRY…TKLS. Residues 1710–2000 form the PPM-type phosphatase domain; the sequence is AYGIADALGK…ESIMVMVISV (291 aa). The region spanning 2058 to 2194 is the Guanylate cyclase domain; that stretch reads ALVFTDIKNS…PMVNRAARIS (137 aa). Mg(2+)-binding residues include Asp2063 and Asp2105. Disordered regions lie at residues 2220-2241, 2354-2378, and 2467-2493; these read DESS…TEEE, EADR…HGTA, and PPRA…ELVP. Positions 2470 to 2485 are enriched in polar residues; sequence ASTSALSLPSPRTSPR.

It belongs to the adenylyl cyclase class-3 family. Requires Mg(2+) as cofactor.

The enzyme catalyses ATP = 3',5'-cyclic AMP + diphosphate. Plays essential roles in regulation of cellular metabolism by catalyzing the synthesis of a second messenger, cAMP. The protein is Adenylate cyclase (UAC1) of Mycosarcoma maydis (Corn smut fungus).